A 114-amino-acid polypeptide reads, in one-letter code: Hydrogenase maturation factor HypA (114 aa).

Residue histidine 2 coordinates Ni(2+). Zn(2+)-binding residues include cysteine 73, cysteine 76, cysteine 89, and cysteine 92.

Belongs to the HypA/HybF family.

Functionally, involved in the maturation of [NiFe] hydrogenases. Required for nickel insertion into the metal center of the hydrogenase. This is Hydrogenase maturation factor HypA from Psychromonas ingrahamii (strain DSM 17664 / CCUG 51855 / 37).